The sequence spans 664 residues: Glycine--tRNA ligase beta subunit (664 aa).

The protein belongs to the class-II aminoacyl-tRNA synthetase family. Tetramer of two alpha and two beta subunits.

It is found in the cytoplasm. The enzyme catalyses tRNA(Gly) + glycine + ATP = glycyl-tRNA(Gly) + AMP + diphosphate. This Aquifex aeolicus (strain VF5) protein is Glycine--tRNA ligase beta subunit (glyS).